A 676-amino-acid chain; its full sequence is Kojibiose hydrolase (676 aa).

The first 20 residues, 1–20, serve as a signal peptide directing secretion; the sequence is MNKGIIQLLALSLFCISVKA. Glutamate 469 acts as the Proton donor in catalysis. The active-site Proton acceptor is the glutamate 613.

Belongs to the glycosyl hydrolase 65 family.

It carries out the reaction kojibiose + H2O = beta-D-glucose + D-glucose. In terms of biological role, glycosidase that specifically hydrolyzes kojibiose to beta-glucose and glucose. Besides its activity on kojibiose, is also able to act on alpha-1,2-oligoglucans with a higher degree of polymerization. Shows weak activity on nigerose, but is not capable of breaking down trehalose, maltose, isomaltose, sucrose, isomaltulose, turanose or melezitose. In Mucilaginibacter mallensis, this protein is Kojibiose hydrolase.